Here is a 466-residue protein sequence, read N- to C-terminus: ATP synthase subunit beta (466 aa).

Position 148–155 (148–155) interacts with ATP; it reads GGAGVGKT.

Belongs to the ATPase alpha/beta chains family. F-type ATPases have 2 components, CF(1) - the catalytic core - and CF(0) - the membrane proton channel. CF(1) has five subunits: alpha(3), beta(3), gamma(1), delta(1), epsilon(1). CF(0) has three main subunits: a(1), b(2) and c(9-12). The alpha and beta chains form an alternating ring which encloses part of the gamma chain. CF(1) is attached to CF(0) by a central stalk formed by the gamma and epsilon chains, while a peripheral stalk is formed by the delta and b chains.

The protein resides in the cell inner membrane. It carries out the reaction ATP + H2O + 4 H(+)(in) = ADP + phosphate + 5 H(+)(out). Its function is as follows. Produces ATP from ADP in the presence of a proton gradient across the membrane. The catalytic sites are hosted primarily by the beta subunits. The sequence is that of ATP synthase subunit beta from Xylella fastidiosa (strain 9a5c).